The primary structure comprises 141 residues: Transcriptional regulator MraZ (141 aa).

2 consecutive SpoVT-AbrB domains span residues 5–47 and 76–119; these read EFEH…PAER and AAEC…GAEH.

This sequence belongs to the MraZ family. In terms of assembly, forms oligomers.

The protein localises to the cytoplasm. Its subcellular location is the nucleoid. In Lactiplantibacillus plantarum (strain ATCC BAA-793 / NCIMB 8826 / WCFS1) (Lactobacillus plantarum), this protein is Transcriptional regulator MraZ.